The sequence spans 361 residues: Peptide chain release factor 1 (361 aa).

Position 237 is an N5-methylglutamine (Gln237). Basic and acidic residues predominate over residues 285–296; that stretch reads DEKRRSAEESTR. Positions 285-305 are disordered; sequence DEKRRSAEESTRRNLVGSGDR.

Belongs to the prokaryotic/mitochondrial release factor family. Post-translationally, methylated by PrmC. Methylation increases the termination efficiency of RF1.

The protein resides in the cytoplasm. Peptide chain release factor 1 directs the termination of translation in response to the peptide chain termination codons UAG and UAA. In Shewanella sediminis (strain HAW-EB3), this protein is Peptide chain release factor 1.